A 218-amino-acid chain; its full sequence is Sulfite reductase, assimilatory-type (218 aa).

Residues cysteine 91, cysteine 97, cysteine 131, and cysteine 135 each coordinate [4Fe-4S] cluster. Residue cysteine 135 coordinates siroheme.

Its function is as follows. This enzyme catalyzes the 6-electron reduction of sulfite to sulfide. This is one of several activities required for the biosynthesis of L-cysteine from sulfate. The protein is Sulfite reductase, assimilatory-type of Nitratidesulfovibrio vulgaris (strain ATCC 29579 / DSM 644 / CCUG 34227 / NCIMB 8303 / VKM B-1760 / Hildenborough) (Desulfovibrio vulgaris).